A 255-amino-acid chain; its full sequence is Indole-3-glycerol phosphate synthase (255 aa).

This sequence belongs to the TrpC family.

It carries out the reaction 1-(2-carboxyphenylamino)-1-deoxy-D-ribulose 5-phosphate + H(+) = (1S,2R)-1-C-(indol-3-yl)glycerol 3-phosphate + CO2 + H2O. It functions in the pathway amino-acid biosynthesis; L-tryptophan biosynthesis; L-tryptophan from chorismate: step 4/5. The chain is Indole-3-glycerol phosphate synthase from Streptococcus thermophilus (strain ATCC BAA-491 / LMD-9).